The following is a 244-amino-acid chain: Ethylene-responsive transcription factor ERF013 (244 aa).

The disordered stretch occupies residues 1-33 (MVKQELKIQVTTSSSSLSHSSSSSSSSTSALRH). Residues 11 to 29 (TTSSSSLSHSSSSSSSSTS) are compositionally biased toward low complexity. A DNA-binding region (AP2/ERF) is located at residues 42–99 (KYKGVRMRSWGSWVTEIRAPNQKTRIWLGSYSTAEAAARAYDAALLCLKGPKANLNFP). Residues 123–178 (QKVAAQAANSSSDHFTPPSDENDHDHDDGLDHHPSASSSAASSPPDDDHHNDDDGD) form a disordered region. Basic and acidic residues predominate over residues 143 to 156 (ENDHDHDDGLDHHP). Residues 157–166 (SASSSAASSP) show a composition bias toward low complexity.

Belongs to the AP2/ERF transcription factor family. ERF subfamily.

Its subcellular location is the nucleus. Its function is as follows. Probably acts as a transcriptional activator. Binds to the GCC-box pathogenesis-related promoter element. May be involved in the regulation of gene expression by stress factors and by components of stress signal transduction pathways. The polypeptide is Ethylene-responsive transcription factor ERF013 (ERF013) (Arabidopsis thaliana (Mouse-ear cress)).